The sequence spans 295 residues: Probable protein phosphatase 2C 6 (295 aa).

The region spanning 23–294 (QYAATHMQGW…DNMTCILIQF (272 aa)) is the PPM-type phosphatase domain. Mn(2+) contacts are provided by aspartate 57, glycine 58, aspartate 237, and aspartate 285.

It belongs to the PP2C family. It depends on Mg(2+) as a cofactor. Mn(2+) serves as cofactor.

Its subcellular location is the membrane. The catalysed reaction is O-phospho-L-seryl-[protein] + H2O = L-seryl-[protein] + phosphate. It carries out the reaction O-phospho-L-threonyl-[protein] + H2O = L-threonyl-[protein] + phosphate. Functionally, enzyme with a broad specificity. This chain is Probable protein phosphatase 2C 6, found in Paramecium tetraurelia.